The chain runs to 215 residues: Cytochrome b6 (215 aa).

The helical transmembrane segment at 32 to 52 threads the bilayer; it reads IFYCLGGITLTCFLIQFATGF. Cys35 provides a ligand contact to heme c. Residues His86 and His100 each coordinate heme b. 3 consecutive transmembrane segments (helical) span residues 90 to 110, 116 to 136, and 186 to 206; these read ASMM…TGGF, LTWV…VTGY, and LHTF…FLMI. Residues His187 and His202 each contribute to the heme b site.

The protein belongs to the cytochrome b family. PetB subfamily. As to quaternary structure, the 4 large subunits of the cytochrome b6-f complex are cytochrome b6, subunit IV (17 kDa polypeptide, PetD), cytochrome f and the Rieske protein, while the 4 small subunits are PetG, PetL, PetM and PetN. The complex functions as a dimer. Heme b serves as cofactor. It depends on heme c as a cofactor.

It is found in the cellular thylakoid membrane. Functionally, component of the cytochrome b6-f complex, which mediates electron transfer between photosystem II (PSII) and photosystem I (PSI), cyclic electron flow around PSI, and state transitions. The chain is Cytochrome b6 from Synechococcus elongatus.